The sequence spans 410 residues: S-adenosylmethionine synthase (410 aa).

An ATP-binding site is contributed by His21. Asp23 contacts Mg(2+). Glu49 lines the K(+) pocket. 2 residues coordinate L-methionine: Glu62 and Gln105. Residues 105–115 (QSQEIGAGVDQ) form a flexible loop region. A disordered region spans residues 107–133 (QEIGAGVDQSHEVRSGENTDADDQAGA). Residues 180–182 (DGK), Asp261, 267–268 (RK), Ala284, and Lys288 each bind ATP. Residue Asp261 participates in L-methionine binding. Residue Lys292 participates in L-methionine binding.

This sequence belongs to the AdoMet synthase family. As to quaternary structure, homotetramer; dimer of dimers. The cofactor is Mg(2+). Requires K(+) as cofactor.

Its subcellular location is the cytoplasm. It catalyses the reaction L-methionine + ATP + H2O = S-adenosyl-L-methionine + phosphate + diphosphate. The protein operates within amino-acid biosynthesis; S-adenosyl-L-methionine biosynthesis; S-adenosyl-L-methionine from L-methionine: step 1/1. In terms of biological role, catalyzes the formation of S-adenosylmethionine (AdoMet) from methionine and ATP. The overall synthetic reaction is composed of two sequential steps, AdoMet formation and the subsequent tripolyphosphate hydrolysis which occurs prior to release of AdoMet from the enzyme. The sequence is that of S-adenosylmethionine synthase from Corynebacterium diphtheriae (strain ATCC 700971 / NCTC 13129 / Biotype gravis).